We begin with the raw amino-acid sequence, 162 residues long: Probable chemoreceptor glutamine deamidase CheD 3 (162 aa).

This sequence belongs to the CheD family.

The catalysed reaction is L-glutaminyl-[protein] + H2O = L-glutamyl-[protein] + NH4(+). Probably deamidates glutamine residues to glutamate on methyl-accepting chemotaxis receptors (MCPs), playing an important role in chemotaxis. This is Probable chemoreceptor glutamine deamidase CheD 3 from Geobacter sulfurreducens (strain ATCC 51573 / DSM 12127 / PCA).